Here is a 224-residue protein sequence, read N- to C-terminus: ATP-dependent dethiobiotin synthetase BioD (224 aa).

12–17 (GVGKTF) lines the ATP pocket. Thr16 is a binding site for Mg(2+). Residue Lys37 is part of the active site. A substrate-binding site is contributed by Thr41. Residues Asn52, 107–110 (EGAG), 167–168 (GS), 197–199 (PEG), and Glu204 each bind ATP. Mg(2+) is bound by residues Asn52 and Glu107.

The protein belongs to the dethiobiotin synthetase family. As to quaternary structure, homodimer. It depends on Mg(2+) as a cofactor.

The protein localises to the cytoplasm. The catalysed reaction is (7R,8S)-7,8-diammoniononanoate + CO2 + ATP = (4R,5S)-dethiobiotin + ADP + phosphate + 3 H(+). It functions in the pathway cofactor biosynthesis; biotin biosynthesis; biotin from 7,8-diaminononanoate: step 1/2. Its function is as follows. Catalyzes a mechanistically unusual reaction, the ATP-dependent insertion of CO2 between the N7 and N8 nitrogen atoms of 7,8-diaminopelargonic acid (DAPA, also called 7,8-diammoniononanoate) to form a ureido ring. This Corynebacterium glutamicum (strain ATCC 13032 / DSM 20300 / JCM 1318 / BCRC 11384 / CCUG 27702 / LMG 3730 / NBRC 12168 / NCIMB 10025 / NRRL B-2784 / 534) protein is ATP-dependent dethiobiotin synthetase BioD.